The primary structure comprises 293 residues: Fructose-bisphosphate aldolase (293 aa).

Ser50 contributes to the D-glyceraldehyde 3-phosphate binding site. Residue Asp85 is the Proton donor of the active site. Residues His86, Asp106, Glu136, and His178 each contribute to the Zn(2+) site. Residue Gly179 coordinates dihydroxyacetone phosphate. Residue His208 coordinates Zn(2+). Dihydroxyacetone phosphate-binding positions include 209-211 and 230-233; these read GGS and NVNT.

The protein belongs to the class II fructose-bisphosphate aldolase family. Requires Zn(2+) as cofactor.

It carries out the reaction beta-D-fructose 1,6-bisphosphate = D-glyceraldehyde 3-phosphate + dihydroxyacetone phosphate. It functions in the pathway carbohydrate degradation; glycolysis; D-glyceraldehyde 3-phosphate and glycerone phosphate from D-glucose: step 4/4. In terms of biological role, catalyzes the aldol condensation of dihydroxyacetone phosphate (DHAP or glycerone-phosphate) with glyceraldehyde 3-phosphate (G3P) to form fructose 1,6-bisphosphate (FBP) in gluconeogenesis and the reverse reaction in glycolysis. This is Fructose-bisphosphate aldolase (fba) from Streptococcus pyogenes serotype M6 (strain ATCC BAA-946 / MGAS10394).